Reading from the N-terminus, the 247-residue chain is Probable transcriptional regulatory protein Swit_2142 (247 aa).

Positions 1-14 are enriched in basic residues; it reads MAGHSKFKNIMHRK. The interval 1–21 is disordered; that stretch reads MAGHSKFKNIMHRKGAQDKKR.

Belongs to the TACO1 family.

Its subcellular location is the cytoplasm. This is Probable transcriptional regulatory protein Swit_2142 from Rhizorhabdus wittichii (strain DSM 6014 / CCUG 31198 / JCM 15750 / NBRC 105917 / EY 4224 / RW1) (Sphingomonas wittichii).